A 767-amino-acid polypeptide reads, in one-letter code: MSQETIISNLIDMLKVSAGWDREANEISGRLFHKLMDMSSTETISQYMSLFGPLLEPHILEFIQNYEQEIDEVCLEYRASYDFMCLRNCGILPAKRFYDTYVLPPRTEMNGKYESIPHFFARIAAYCAWNCIMCEPLKDTLVYVQKRDWNVEIKTDMQIFKYFYKVISSQLVCCATPVMRSAGVAGENLSSCFIIAPTLDTEKSTISSIFGELAPLLASRSGVGVDVTKFSFGGKNIHSCLKLINAQVEFFNDKSVRPVSVATYIEVWHCQIHEFLSAKLPENPDRCNSIFQGVCVPSLFFKMYESDPNGLWYLFDPQDAPNLTRLYGLEFEEEYLRLVSEKKYKQSVTLKSLMFSLINTIIKTGSPYVISKEAMNKHHWYETQGEAINCSNLCAEIVQQPKQFTSTCNLANVCLPKCLNSSNFPYTCSNTAQFDFSKLEYAVQAAVFIINACILSPSPTSSATVGQRERSMGIGCHGLADVFSEMGYGYLDLESECLDRDIFETMYYTAVKTSSEICSVGKGQPFAGFRKSKLAHGVFHWATWDAMPQRVPMKQWIHLQDNIKKFGVFNSQFIALMPTAGTSQLTGYTDSFYPYFANMSSKVSNKEEIMKPNITFLKNVKPQDLCTVRFYGGDVSMMPEDVSTRYKHFLTAFDYCPEAQMRRASIRAPYVDQSQSLTLFLTEENVQSAKYLKDLLLLGFRLGLKTIMYYCRVKKTTKLLQLECLKLDEHTKKDAQIVLADLARELPDSHKTEDACPLDQSECIACQ.

Residues Thr176, 191 to 192 (SC), Gly222, 392 to 396 (NLCAE), and 578 to 582 (PTAGT) contribute to the substrate site. Cys192 and Cys408 are joined by a disulfide. Catalysis depends on Asn392, which acts as the Proton acceptor. The active-site Cysteine radical intermediate is the Cys394. Glu396 serves as the catalytic Proton acceptor.

This sequence belongs to the ribonucleoside diphosphate reductase large chain family. Heterotetramer composed of a homodimer of the large subunit (R1) and a homodimer of the small subunit (R2). Larger multisubunit protein complex are also active, composed of (R1)n(R2)n.

The enzyme catalyses a 2'-deoxyribonucleoside 5'-diphosphate + [thioredoxin]-disulfide + H2O = a ribonucleoside 5'-diphosphate + [thioredoxin]-dithiol. In terms of biological role, ribonucleoside-diphosphate reductase holoenzyme provides the precursors necessary for viral DNA synthesis. Allows virus growth in non-dividing cells, as well as reactivation from latency in infected hosts. Catalyzes the biosynthesis of deoxyribonucleotides from the corresponding ribonucleotides. The polypeptide is Ribonucleoside-diphosphate reductase large subunit (Saimiri sciureus (Common squirrel monkey)).